We begin with the raw amino-acid sequence, 949 residues long: Glycine dehydrogenase (decarboxylating) (949 aa).

At lysine 700 the chain carries N6-(pyridoxal phosphate)lysine.

The protein belongs to the GcvP family. In terms of assembly, the glycine cleavage system is composed of four proteins: P, T, L and H. It depends on pyridoxal 5'-phosphate as a cofactor.

It catalyses the reaction N(6)-[(R)-lipoyl]-L-lysyl-[glycine-cleavage complex H protein] + glycine + H(+) = N(6)-[(R)-S(8)-aminomethyldihydrolipoyl]-L-lysyl-[glycine-cleavage complex H protein] + CO2. In terms of biological role, the glycine cleavage system catalyzes the degradation of glycine. The P protein binds the alpha-amino group of glycine through its pyridoxal phosphate cofactor; CO(2) is released and the remaining methylamine moiety is then transferred to the lipoamide cofactor of the H protein. The protein is Glycine dehydrogenase (decarboxylating) of Christiangramia forsetii (strain DSM 17595 / CGMCC 1.15422 / KT0803) (Gramella forsetii).